The primary structure comprises 87 residues: Large ribosomal subunit protein bL31B (87 aa).

The protein belongs to the bacterial ribosomal protein bL31 family. Type B subfamily. In terms of assembly, part of the 50S ribosomal subunit.

The polypeptide is Large ribosomal subunit protein bL31B (Salinispora arenicola (strain CNS-205)).